We begin with the raw amino-acid sequence, 905 residues long: MELSLQGSLFGAPEPTVNAPNTRPSTGDLPNPFNSDHNLSDADLSKDALARPRRRNETSGSTPTAGVDPDDRADETRDDTTSTDEPAWGHHSQLKPEQLTPVLRHYVELKMAHPERVLLYRLGDFFECFFEDAITLSRELELTLTGKDAGKAIGRVPMAGIPHHAAERHCSDLIRLGYSVALCDQLETTPTKGALLKRDITRVLTPGTVLEEGMLTARRNNWLAAVVVEPATQHQPFRWGLAQADVSTGDVQVLQREGSDGLHQHLARLQASELLWSGDDPAPAWCPDRVGLTPMSSTPFSRPEAEAVLLEHYNLASLDGIGLPEVPLALQAIGGLLQYVGDTQPLEDNARVPLDVPAIVHNGDSLVLDAQTRRNLELTATQRDGLLQGSLLWAIDRTLTAMGGRCLRRWIEAPLMDRSAIQQRQTVVSRLVEKRPLRQTLRRLLRPMGDLERLAGRAGAGHAGARDLVAIADGLERLPQLAAQLNGQLTDGPAWLQALFDPQPQLQELATTVSNTLKEAPPLSLSEGGFIHDGVDPLLDGLRNQLDDQDAWLAQQERQERQGSGISTLRLQHHRTFGYFLAVSKAKTSSVPDHWIRRQTLANEERFITPELKEREGHIFQLRARACQREYELFVQLREQVGLMATSIREAARAVAGLDALTGLADVAATSNFCAPELTNNRELTLSAARHPVVEQLLVETPFTPNDVALGNGRDLVVLTGPNASGKSCYLRQIGLIQLLAQVGSWVPAKEAKIGIADRIFTRVGAVDDLAAGQSTFMVEMAETANILHHATSRSLVLLDEIGRGTATFDGLSIAWAVSEHLAGDLKARTVFATHYHELNALAGERDNVANFQVMVEETGDNLLFLHQVRPGGASRSYGIEAARLAGVPMAVVQRAQQVLDQLGD.

The interval 1–95 is disordered; it reads MELSLQGSLF…PAWGHHSQLK (95 aa). The span at 38–50 shows a compositional bias: basic and acidic residues; it reads NLSDADLSKDALA. 721–728 is an ATP binding site; the sequence is GPNASGKS.

It belongs to the DNA mismatch repair MutS family.

Functionally, this protein is involved in the repair of mismatches in DNA. It is possible that it carries out the mismatch recognition step. This protein has a weak ATPase activity. The polypeptide is DNA mismatch repair protein MutS (Synechococcus sp. (strain CC9902)).